Here is a 260-residue protein sequence, read N- to C-terminus: LOB domain-containing protein 6 (260 aa).

The region spanning 32 to 133 (SPCAACKFLR…QDLARAKYEL (102 aa)) is the LOB domain.

The protein belongs to the LOB domain-containing protein family. Interacts with RS2. Expressed in leaves, leaf primordia, immature ears, immature tassels, whole ovules, silk and husk leaves. Found on the adaxial side of organs.

The protein resides in the nucleus. Promotes the switch from proliferation to differentiation in the embryo sac. Negative regulator of cell proliferation in the adaxial side of leaves. Regulates the formation of a symmetric lamina and the establishment of venation. Interacts directly with RS2 (rough sheath 2) to repress some knox homeobox genes. The chain is LOB domain-containing protein 6 (LBD6) from Zea mays (Maize).